The primary structure comprises 387 residues: N-acetyldiaminopimelate deacetylase (387 aa).

Residue D75 is part of the active site. The active-site Proton acceptor is E134.

It belongs to the peptidase M20A family. N-acetyldiaminopimelate deacetylase subfamily.

The catalysed reaction is N-acetyl-(2S,6S)-2,6-diaminopimelate + H2O = (2S,6S)-2,6-diaminopimelate + acetate. Its pathway is amino-acid biosynthesis; L-lysine biosynthesis via DAP pathway; LL-2,6-diaminopimelate from (S)-tetrahydrodipicolinate (acetylase route): step 3/3. Its function is as follows. Catalyzes the conversion of N-acetyl-diaminopimelate to diaminopimelate and acetate. The polypeptide is N-acetyldiaminopimelate deacetylase (Leuconostoc citreum (strain KM20)).